Here is a 325-residue protein sequence, read N- to C-terminus: MSKRIYSRIAGTGSYLPEKVLTNDDMSKIVDTSDEWIFSRTGIRERHIVADDQTTSDLAYFASLRAMEAAGVTADEIDLIVIGTTTPDLIFPSTACLLQARLGNIGCGAMDVNAACSGFVYALSVADKFVRSGDAKTVLVVGAETLTRIVDWTDRTTCVLFGDGAGAVILKADEETGILSTHLHADGSKKELLWDPVGVSVGFGEGKNGGGALLMKGNDVFKYAVKALDSVVDETLAASGYDKHDLDWLIPHQANLRIIEATAKRMELPMEQVVVTVDRHGNTSSASVPLALDEAVRSGRVQRGQLLLLEAFGGGFTWGSALLRY.

Catalysis depends on residues Cys116 and His252. Residues 253 to 257 (QANLR) form an ACP-binding region. Asn282 is an active-site residue.

Belongs to the thiolase-like superfamily. FabH family. Homodimer.

It is found in the cytoplasm. It catalyses the reaction malonyl-[ACP] + acetyl-CoA + H(+) = 3-oxobutanoyl-[ACP] + CO2 + CoA. It functions in the pathway lipid metabolism; fatty acid biosynthesis. In terms of biological role, catalyzes the condensation reaction of fatty acid synthesis by the addition to an acyl acceptor of two carbons from malonyl-ACP. Catalyzes the first condensation reaction which initiates fatty acid synthesis and may therefore play a role in governing the total rate of fatty acid production. Possesses both acetoacetyl-ACP synthase and acetyl transacylase activities. Its substrate specificity determines the biosynthesis of branched-chain and/or straight-chain of fatty acids. The polypeptide is Beta-ketoacyl-[acyl-carrier-protein] synthase III (Xanthomonas axonopodis pv. citri (strain 306)).